The primary structure comprises 512 residues: Putative B3 domain-containing protein REM4 (512 aa).

Residues 11–103 (NKAFFIIDLS…VFHVSPFGRS (93 aa)) constitute a DNA-binding region (TF-B3 1). The disordered stretch occupies residues 111-145 (SSSTSDDDDDERTVFDDDEDDDVGDDDDNSISEDD). The span at 115–145 (SDDDDDERTVFDDDEDDDVGDDDDNSISEDD) shows a compositional bias: acidic residues. DNA-binding regions (TF-B3) lie at residues 169–265 (YLVA…LCPN) and 307–403 (ILTF…CSKV). Residues 408 to 465 (SSDGHKTADRKPRMTDQAPLAEEQTDNRVEKRAQVTEEGGPSRSTRADPGNLQQKQPC) are disordered. 2 stretches are compositionally biased toward basic and acidic residues: residues 410–421 (DGHKTADRKPRM) and 432–442 (TDNRVEKRAQV).

Its subcellular location is the nucleus. This Arabidopsis thaliana (Mouse-ear cress) protein is Putative B3 domain-containing protein REM4 (REM4).